A 364-amino-acid polypeptide reads, in one-letter code: Histidinol-phosphate aminotransferase (364 aa).

Position 226 is an N6-(pyridoxal phosphate)lysine (lysine 226).

It belongs to the class-II pyridoxal-phosphate-dependent aminotransferase family. Histidinol-phosphate aminotransferase subfamily. As to quaternary structure, homodimer. Pyridoxal 5'-phosphate serves as cofactor.

It catalyses the reaction L-histidinol phosphate + 2-oxoglutarate = 3-(imidazol-4-yl)-2-oxopropyl phosphate + L-glutamate. It functions in the pathway amino-acid biosynthesis; L-histidine biosynthesis; L-histidine from 5-phospho-alpha-D-ribose 1-diphosphate: step 7/9. The protein is Histidinol-phosphate aminotransferase of Sulfurimonas denitrificans (strain ATCC 33889 / DSM 1251) (Thiomicrospira denitrificans (strain ATCC 33889 / DSM 1251)).